The chain runs to 396 residues: Putative carbamoyltransferase YgeW (396 aa).

Carbamoyl phosphate-binding positions include 71-74 (STRT), Q98, 165-168 (HPTQ), and 330-331 (CL).

Belongs to the aspartate/ornithine carbamoyltransferase superfamily. In terms of assembly, homotrimer.

This is Putative carbamoyltransferase YgeW (ygeW) from Escherichia coli O6:H1 (strain CFT073 / ATCC 700928 / UPEC).